We begin with the raw amino-acid sequence, 178 residues long: ATP synthase subunit delta (178 aa).

This sequence belongs to the ATPase delta chain family. As to quaternary structure, F-type ATPases have 2 components, F(1) - the catalytic core - and F(0) - the membrane proton channel. F(1) has five subunits: alpha(3), beta(3), gamma(1), delta(1), epsilon(1). F(0) has three main subunits: a(1), b(2) and c(10-14). The alpha and beta chains form an alternating ring which encloses part of the gamma chain. F(1) is attached to F(0) by a central stalk formed by the gamma and epsilon chains, while a peripheral stalk is formed by the delta and b chains.

It localises to the cell inner membrane. Its function is as follows. F(1)F(0) ATP synthase produces ATP from ADP in the presence of a proton or sodium gradient. F-type ATPases consist of two structural domains, F(1) containing the extramembraneous catalytic core and F(0) containing the membrane proton channel, linked together by a central stalk and a peripheral stalk. During catalysis, ATP synthesis in the catalytic domain of F(1) is coupled via a rotary mechanism of the central stalk subunits to proton translocation. In terms of biological role, this protein is part of the stalk that links CF(0) to CF(1). It either transmits conformational changes from CF(0) to CF(1) or is implicated in proton conduction. The protein is ATP synthase subunit delta of Acinetobacter baylyi (strain ATCC 33305 / BD413 / ADP1).